The chain runs to 301 residues: Probable DNA-directed RNA polymerase III subunit rpc6 (301 aa).

It belongs to the eukaryotic RPC34/RPC39 RNA polymerase subunit family. Component of the RNA polymerase III (Pol III) complex consisting of 17 subunits. Interacts with TFIIB.

The protein resides in the nucleus. DNA-dependent RNA polymerase catalyzes the transcription of DNA into RNA using the four ribonucleoside triphosphates as substrates. Specific peripheric component of RNA polymerase III which synthesizes small RNAs, such as 5S rRNA and tRNAs. The protein is Probable DNA-directed RNA polymerase III subunit rpc6 (rpc6) of Schizosaccharomyces pombe (strain 972 / ATCC 24843) (Fission yeast).